Consider the following 124-residue polypeptide: Small ribosomal subunit protein bS6 (124 aa).

Residues 96 to 124 are disordered; sequence ETGPSPMMKEVQREEAKKAAAAQPTEAQA. Over residues 114 to 124 the composition is skewed to low complexity; that stretch reads AAAAQPTEAQA.

The protein belongs to the bacterial ribosomal protein bS6 family.

In terms of biological role, binds together with bS18 to 16S ribosomal RNA. In Burkholderia vietnamiensis (strain G4 / LMG 22486) (Burkholderia cepacia (strain R1808)), this protein is Small ribosomal subunit protein bS6.